The following is a 533-amino-acid chain: UDP-glucuronosyltransferase 1-2 (533 aa).

Positions 1–27 (MDTGLCVPLRGISGLLLLLCALPWAEG) are cleaved as a signal peptide. N-linked (GlcNAc...) asparagine glycans are attached at residues N141, N295, and N433. Residues 491 to 511 (VIGFLLAIVLTVVFIVFKCCA) form a helical membrane-spanning segment.

Belongs to the UDP-glycosyltransferase family. In terms of tissue distribution, expressed in kidney.

It localises to the microsome. It is found in the endoplasmic reticulum membrane. It carries out the reaction glucuronate acceptor + UDP-alpha-D-glucuronate = acceptor beta-D-glucuronoside + UDP + H(+). Functionally, UDPGT is of major importance in the conjugation and subsequent elimination of potentially toxic xenobiotics and endogenous compounds. The protein is UDP-glucuronosyltransferase 1-2 (Ugt1a2) of Mus musculus (Mouse).